Consider the following 79-residue polypeptide: Aquaporin Z (79 aa).

2 helical membrane passes run 4-24 (LFAE…SAVF) and 33-53 (IGFA…AYAV). The short motif at 62–64 (NPA) is the NPA 1 element.

This sequence belongs to the MIP/aquaporin (TC 1.A.8) family. In terms of assembly, homotetramer.

It is found in the cell membrane. The catalysed reaction is H2O(in) = H2O(out). Functionally, channel that permits osmotically driven movement of water in both directions. It is involved in the osmoregulation and in the maintenance of cell turgor during volume expansion in rapidly growing cells. It mediates rapid entry or exit of water in response to abrupt changes in osmolarity. The polypeptide is Aquaporin Z (Flavobacterium johnsoniae (Cytophaga johnsonae)).